The chain runs to 194 residues: NADH-quinone oxidoreductase subunit B (194 aa).

Residues Cys73, Cys74, Cys138, and Cys168 each coordinate [4Fe-4S] cluster.

Belongs to the complex I 20 kDa subunit family. In terms of assembly, NDH-1 is composed of 14 different subunits. Subunits NuoB, C, D, E, F, and G constitute the peripheral sector of the complex. The cofactor is [4Fe-4S] cluster.

It localises to the cell inner membrane. It carries out the reaction a quinone + NADH + 5 H(+)(in) = a quinol + NAD(+) + 4 H(+)(out). Functionally, NDH-1 shuttles electrons from NADH, via FMN and iron-sulfur (Fe-S) centers, to quinones in the respiratory chain. The immediate electron acceptor for the enzyme in this species is believed to be ubiquinone. Couples the redox reaction to proton translocation (for every two electrons transferred, four hydrogen ions are translocated across the cytoplasmic membrane), and thus conserves the redox energy in a proton gradient. This Rhizobium leguminosarum bv. trifolii (strain WSM2304) protein is NADH-quinone oxidoreductase subunit B.